Here is a 292-residue protein sequence, read N- to C-terminus: Glycine--tRNA ligase alpha subunit (292 aa).

It belongs to the class-II aminoacyl-tRNA synthetase family. In terms of assembly, tetramer of two alpha and two beta subunits.

It is found in the cytoplasm. It catalyses the reaction tRNA(Gly) + glycine + ATP = glycyl-tRNA(Gly) + AMP + diphosphate. This chain is Glycine--tRNA ligase alpha subunit, found in Geobacter sulfurreducens (strain ATCC 51573 / DSM 12127 / PCA).